Consider the following 467-residue polypeptide: Pentatricopeptide repeat-containing protein At1g77170, mitochondrial (467 aa).

The N-terminal 30 residues, 1–30, are a transit peptide targeting the mitochondrion; it reads MFFSGLISKLHVHGTKRTNHFTIFHRLNHF. PPR repeat units follow at residues 81–115, 116–150, 151–181, 182–216, 217–251, 254–284, 285–319, 320–350, and 356–386; these read IAFLWNNIMRSYIRHESPLDAIQVYLGMVRSTVLP, DRYSLPIVIKAAVQIHDFTLGKELHSVAVRLGFVG, DEFCESGFITLYCKAGEFENARKVFDENPER, KLGSWNAIIGGLNHAGRANEAVEMFVDMKRSGLEP, DDFTMVSVTASCGGLGDLSLAFQLHKCVLQAKTEE, DIMMLNSLIDMYGKCGRMDLASHIFEEMRQR, NVVSWSSMIVGYAANGNTLEALECFRQMREFGVRP, NKITFVGVLSACVHGGLVEEGKTYFAMMKSE, and GLSHYGCIVDLLSRDGQLKEAKKVVEEMPMK. The tract at residues 391–466 is type E motif; that stretch reads VWGCLMGGCE…IPAYSYASTT (76 aa).

It belongs to the PPR family. PCMP-E subfamily.

It is found in the mitochondrion. This Arabidopsis thaliana (Mouse-ear cress) protein is Pentatricopeptide repeat-containing protein At1g77170, mitochondrial (PCMP-E21).